A 747-amino-acid chain; its full sequence is Sushi domain-containing protein 1 (747 aa).

The N-terminal stretch at 1–29 (MGRGPWDAGPSRRLLPLLLLLGLARGAAG) is a signal peptide. Residues 30–721 (APGPDGLDVC…WAQVKDSSLM (692 aa)) lie on the Extracellular side of the membrane. The EGF-like 1 domain occupies 35–72 (GLDVCATCHEHATCQQREGKKICICNYGFVGNGRTQCV). Intrachain disulfides connect Cys39–Cys48, Cys42–Cys57, Cys59–Cys71, Cys77–Cys91, and Cys85–Cys100. An EGF-like 2; calcium-binding domain is found at 73 to 112 (DKNECQFGATLVCGNHTSCHNTPGGFYCICLEGYRATNNN). 2 N-linked (GlcNAc...) asparagine glycosylation sites follow: Asn87 and Asn112. The EGF-like 3; calcium-binding domain occupies 125–162 (DIDECEVSGLCRHGGRCVNTHGSFECYCMDGYLPRNGP). 6 disulfides stabilise this stretch: Cys129-Cys141, Cys135-Cys150, Cys179-Cys221, Cys206-Cys234, Cys239-Cys281, and Cys266-Cys294. Sushi domains lie at 177–236 (IDCG…HCQE) and 237–296 (INCG…TCTE). Asn193 carries an N-linked (GlcNAc...) asparagine glycan. A glycan (N-linked (GlcNAc...) asparagine) is linked at Asn253. Asn348, Asn367, and Asn563 each carry an N-linked (GlcNAc...) asparagine glycan. A helical membrane pass occupies residues 722 to 742 (LLQMAGVGLGSLAVVIILTFL). Over 743–747 (SFSAV) the chain is Cytoplasmic.

Its subcellular location is the membrane. This chain is Sushi domain-containing protein 1 (SUSD1), found in Homo sapiens (Human).